A 1817-amino-acid polypeptide reads, in one-letter code: MFNKSFGTPFGGGTGGFGTTSTFGQNTGFGTTSGGAFGTSAFGSSNNTGGLFGNSQTKPGGLFGTSSFSQPATSTSTGFGFGTSTGTANTLFGTASTGTSLFSSQNNAFAQNKPTGFGNFGTSTSSGGLFGTTNTTSNPFGSTSGSLFGPSSFTAAPTGTTIKFNPPTGTDTMVKAGVSTNISTKHQCITAMKEYESKSLEELRLEDYQANRKGPQNQVGAGTTTGLFGSSPATSSATGLFSSSTTNSGFAYGQNKTAFGTSTTGFGTNPGGLFGQQNQQTTSLFSKPFGQATTTQNTGFSFGNTSTIGQPSTNTMGLFGVTQASQPGGLFGTATNTSTGTAFGTGTGLFGQTNTGFGAVGSTLFGNNKLTTFGSSTTSAPSFGTTSGGLFGNKPTLTLGTNTNTSNFGFGTNTSGNSIFGSKPAPGTLGTGLGAGFGTALGAGQASLFGNNQPKIGGPLGTGAFGAPGFNTTTATLGFGAPQAPVALTDPNASAAQQAVLQQHINSLTYSPFGDSPLFRNPMSDPKKKEERLKPTNPAAQKALTTPTHYKLTPRPATRVRPKALQTTGTAKSHLFDGLDDDEPSLANGAFMPKKSIKKLVLKNLNNSNLFSPVNRDSENLASPSEYPENGERFSFLSKPVDENHQQDGDEDSLVSHFYTNPIAKPIPQTPESAGNKHSNSNSVDDTIVALNMRAALRNGLEGSSEETSFHDESLQDDREEIENNSYHMHPAGIILTKVGYYTIPSMDDLAKITNEKGECIVSDFTIGRKGYGSIYFEGDVNLTNLNLDDIVHIRRKEVVVYLDDNQKPPVGEGLNRKAEVTLDGVWPTDKTSRCLIKSPDRLADINYEGRLEAVSRKQGAQFKEYRPETGSWVFKVSHFSKYGLQDSDEEEEEHPSKTSTKKLKTAPLPPASQTTPLQMALNGKPAPPPQSQSPEVEQLGRVVELDSDMVDITQEPVLDTMLEESMPEDQEPVSASTHIASSLGINPHVLQIMKASLLTDEEDVDMALDQRFSRLPSKADTSQEICSPRLPISASHSSKTRSLVGGLLQSKFTSGAFLSPSVSVQECRTPRAASLMNIPSTSSWSVPPPLTSVFTMPSPAPEVPLKTVGTRRQLGLVPREKSVTYGKGKLLMDMALFMGRSFRVGWGPNWTLANSGEQLNGSHELENHQIADSMEFGFLPNPVAVKPLTESPFKVHLEKLSLRQRKPDEDMKLYQTPLELKLKHSTVHVDELCPLIVPNLGVAVIHDYADWVKEASGDLPEAQIVKHWSLTWTLCEALWGHLKELDSQLNEPREYIQILERRRAFSRWLSCTATPQIEEEVSLTQKNSPVEAVFSYLTGKRISEACSLAQQSGDHRLALLLSQFVGSQSVRELLTMQLVDWHQLQADSFIQDERLRIFALLAGKPVWQLSEKKQINVCSQLDWKRSLAIHLWYLLPPTASISRALSMYEEAFQNTSDSDRYACSPLPSYLEGSGCVIAEEQNSQTPLRDVCFHLLKLYSDRHYDLNQLLEPRSITADPLDYRLSWHLWEVLRALNYTHLSAQCEGVLQASYAGQLESEGLWEWAIFVLLHIDNSGIREKAVRELLTRHCQLLETPESWAKETFLTQKLRVPAKWIHEAKAVRAHMESDKHLEALCLFKAEHWNRCHKLIIRHLASDAIINENYDYLKGFLEDLAPPERSSLIQDWETSGLVYLDYIRVIEMLRHIQQVDCSGNDLEQLHIKVTSLCSRIEQIQCYSAKDRLAQSDMAKRVANLLRVVLSLHHPPDRTSDSTPDPQRVPLRLLAPHIGRLPMPEDYAMDELRSLTQSYLRELAVGSL.

Positions 1-156 (MFNKSFGTPF…LFGPSSFTAA (156 aa)) are FG repeats 1. Residues 157-213 (PTGTTIKFNPPTGTDTMVKAGVSTNISTKHQCITAMKEYESKSLEELRLEDYQANRK) form a GLEBS; interaction with RAE1 region. The segment at 214 to 480 (GPQNQVGAGT…NTTTATLGFG (267 aa)) is FG repeats 2. The tract at residues 512 to 535 (PFGDSPLFRNPMSDPKKKEERLKP) is disordered. At Ser-524 the chain carries Phosphoserine. Residues 525 to 534 (DPKKKEERLK) are compositionally biased toward basic and acidic residues. Lys-563 is covalently cross-linked (Glycyl lysine isopeptide (Lys-Gly) (interchain with G-Cter in SUMO2)). Lys-603 is modified (N6-acetyllysine; alternate). Residue Lys-603 forms a Glycyl lysine isopeptide (Lys-Gly) (interchain with G-Cter in SUMO2); alternate linkage. 6 positions are modified to phosphoserine: Ser-608, Ser-612, Ser-618, Ser-623, Ser-625, and Ser-653. Residues 614-633 (VNRDSENLASPSEYPENGER) are disordered. The tract at residues 662–682 (PIAKPIPQTPESAGNKHSNSN) is disordered. Lys-665 is covalently cross-linked (Glycyl lysine isopeptide (Lys-Gly) (interchain with G-Cter in SUMO2)). Thr-670 bears the Phosphothreonine mark. Residues 670–682 (TPESAGNKHSNSN) are compositionally biased toward polar residues. Residues Ser-673, Ser-681, Ser-683, and Ser-839 each carry the phosphoserine modification. The region spanning 738–880 (KVGYYTIPSM…GSWVFKVSHF (143 aa)) is the Peptidase S59 domain. Ser-881 acts as the Nucleophile in catalysis. The interval 886–937 (QDSDEEEEEHPSKTSTKKLKTAPLPPASQTTPLQMALNGKPAPPPQSQSPEV) is disordered. Phosphoserine is present on residues Ser-888, Ser-897, and Ser-934. Thr-1000 bears the Phosphothreonine mark. 5 positions are modified to phosphoserine: Ser-1023, Ser-1028, Ser-1043, Ser-1060, and Ser-1064. The residue at position 1070 (Thr-1070) is a Phosphothreonine. Ser-1329 is modified (phosphoserine). Thr-1772 carries the post-translational modification Phosphothreonine.

It belongs to the nucleoporin GLFG family. As to quaternary structure, part of the nuclear pore complex (NPC). Interacts directly with NUP96. Part of the Nup160 subcomplex in the nuclear pore which is composed of NUP160, NUP133, NUP107 and NUP96; this complex plays a role in RNA export and in tethering NUP98 and NUP153 to the nucleus. Interacts with RAE1. Does not interact with TPR. Interacts with NUP88. Interacts directly with NUP88 and NUP214, subunits of the cytoplasmic filaments of the NPC. Interacts (via N-terminus) with DHX9 (via DRBM, OB-fold and RGG domains); this interaction occurs in a RNA-dependent manner and stimulates DHX9-mediated ATPase activity. In terms of assembly, (Microbial infection) Interacts with HIV-1 capsid protein P24 and nucleocapsid protein P7 (in vitro); the interaction may promote the integration of the virus in the host nucleus (in vitro). (Microbial infection) Interacts with vesicular stomatitis virus protein M. As to quaternary structure, (Microbial infection) Interacts with SARS coronavirus-2/SARS-CoV-2 ORF6 protein; the interaction blocks STAT1 nuclear translocation, antagonizes interferon signaling and blocks mRNA nuclear export (ex vivo). In terms of assembly, (Microbial infection) Interacts with SARS coronavirus/SARS-CoV ORF6 protein. Post-translationally, isoform 1 to isoform 4 are autoproteolytically cleaved to yield Nup98 and Nup96 or Nup98 only, respectively. Cleaved Nup98 is necessary for the targeting of Nup98 to the nuclear pore and the interaction with Nup96. Proteolytically degraded after poliovirus (PV) infection; degradation is partial and NCP- and TPR-binding domains withstand degradation.

The protein localises to the nucleus membrane. The protein resides in the nucleus. It is found in the nuclear pore complex. It localises to the nucleoplasm. Functionally, plays a role in the nuclear pore complex (NPC) assembly and/or maintenance. NUP98 and NUP96 are involved in the bidirectional transport across the NPC. May anchor NUP153 and TPR to the NPC. In cooperation with DHX9, plays a role in transcription and alternative splicing activation of a subset of genes. Involved in the localization of DHX9 in discrete intranuclear foci (GLFG-body). (Microbial infection) Interacts with HIV-1 capsid protein P24 and nucleocapsid protein P7 and may thereby promote the integration of the virus in the host nucleus (in vitro). Binding affinity to HIV-1 CA-NC complexes bearing the capsid change Asn-74-Asp is reduced (in vitro). This is Nuclear pore complex protein Nup98-Nup96 from Homo sapiens (Human).